The primary structure comprises 198 residues: Synaptobrevin homolog YKT6-B (198 aa).

In terms of domain architecture, Longin spans 8 to 127 (VLYKGENKVH…IQYNALDSYL (120 aa)). Positions 138-198 (PMSKVQAELD…RKQNSCCDIM (61 aa)) constitute a v-SNARE coiled-coil homology domain. Cysteine 194 carries the S-palmitoyl cysteine lipid modification. A Cysteine methyl ester modification is found at cysteine 195. A lipid anchor (S-farnesyl cysteine) is attached at cysteine 195. The propeptide at 196–198 (DIM) is removed in mature form.

It belongs to the synaptobrevin family. Post-translationally, palmitoylated; catalyzes its own palmitoylation. Palmitoylation is required for Golgi targeting. In terms of processing, farnesylation is required for Golgi targeting.

Its subcellular location is the cytoplasm. The protein resides in the cytosol. The protein localises to the cytoplasmic vesicle membrane. It localises to the golgi apparatus membrane. In terms of biological role, vesicular soluble NSF attachment protein receptor (v-SNARE) mediating vesicle docking and fusion to a specific acceptor cellular compartment. Functions in endoplasmic reticulum to Golgi transport; as part of a SNARE complex composed of GOSR1, GOSR2 and STX5. Functions in early/recycling endosome to TGN transport; as part of a SNARE complex composed of BET1L, GOSR1 and STX5. Has a S-palmitoyl transferase activity. This chain is Synaptobrevin homolog YKT6-B (ykt6-b), found in Xenopus laevis (African clawed frog).